The sequence spans 426 residues: MSKSENLFAAARELIPGGVNSPVRAFTGVGGTPLFIERADGAYLYDADGKAYIDYVGSWGPMVLGHNHPAIRNAVIEAAERGLSFGAPTEMEVKMAQLVTELVPTMDMVRMVNSGTEATMSAIRLARGFTRRDKIIKFEGCYHGHADHLLVKAGSGALTLGQPNSPGVPADFAKHTLTCTYNDLASVREAFELYPQDIACIIVEPVAGNMNCIPPQPDFLPGLRALCDEFGALLIIDEVMTGFRVALAGAQAYYNVVPDLTCLGKIIGGGMPVGAFGGRREVMEALAPTGPVYQAGTLSGNPIAMAAGFACLSEVAQPGVHSTLDALTTQLAEGLLDAAQEAGVPLVVNHVGGMFGFFFTDADSVTCYHDVVKCDVERFKRFFHLMLEEGVYFAPSAFEAGFMSVAHSEEDINNTIDAARRVFAKL.

Residue lysine 265 is modified to N6-(pyridoxal phosphate)lysine.

It belongs to the class-III pyridoxal-phosphate-dependent aminotransferase family. HemL subfamily. Homodimer. Pyridoxal 5'-phosphate serves as cofactor.

The protein localises to the cytoplasm. The enzyme catalyses (S)-4-amino-5-oxopentanoate = 5-aminolevulinate. It participates in porphyrin-containing compound metabolism; protoporphyrin-IX biosynthesis; 5-aminolevulinate from L-glutamyl-tRNA(Glu): step 2/2. The protein is Glutamate-1-semialdehyde 2,1-aminomutase of Cronobacter sakazakii (strain ATCC BAA-894) (Enterobacter sakazakii).